We begin with the raw amino-acid sequence, 396 residues long: 1-deoxy-D-xylulose 5-phosphate reductoisomerase (396 aa).

Residues Thr-13, Gly-14, Ser-15, Ile-16, and Asn-127 each coordinate NADPH. 1-deoxy-D-xylulose 5-phosphate is bound at residue Lys-128. Glu-129 provides a ligand contact to NADPH. Asp-153 provides a ligand contact to Mn(2+). 1-deoxy-D-xylulose 5-phosphate is bound by residues Ser-154, Glu-155, Ser-184, and His-207. Residue Glu-155 participates in Mn(2+) binding. Gly-213 is a binding site for NADPH. Residues Ser-220, Asn-225, Lys-226, and Glu-229 each coordinate 1-deoxy-D-xylulose 5-phosphate. Mn(2+) is bound at residue Glu-229.

Belongs to the DXR family. Mg(2+) serves as cofactor. The cofactor is Mn(2+).

The enzyme catalyses 2-C-methyl-D-erythritol 4-phosphate + NADP(+) = 1-deoxy-D-xylulose 5-phosphate + NADPH + H(+). It functions in the pathway isoprenoid biosynthesis; isopentenyl diphosphate biosynthesis via DXP pathway; isopentenyl diphosphate from 1-deoxy-D-xylulose 5-phosphate: step 1/6. Its function is as follows. Catalyzes the NADPH-dependent rearrangement and reduction of 1-deoxy-D-xylulose-5-phosphate (DXP) to 2-C-methyl-D-erythritol 4-phosphate (MEP). The chain is 1-deoxy-D-xylulose 5-phosphate reductoisomerase from Pseudomonas fluorescens (strain ATCC BAA-477 / NRRL B-23932 / Pf-5).